Here is a 343-residue protein sequence, read N- to C-terminus: N(4)-bis(aminopropyl)spermidine synthase (343 aa).

This sequence belongs to the branched-chain polyamine synthase family.

The protein localises to the cytoplasm. The catalysed reaction is 2 S-adenosyl 3-(methylsulfanyl)propylamine + spermidine = N(4)-bis(aminopropyl)spermidine + 2 S-methyl-5'-thioadenosine + 2 H(+). Its pathway is amine and polyamine biosynthesis. Its function is as follows. Involved in the biosynthesis of branched-chain polyamines, which support the growth of thermophiles under high-temperature conditions. Catalyzes the sequential condensation of spermidine with the aminopropyl groups of decarboxylated S-adenosylmethionines to produce N(4)-bis(aminopropyl)spermidine via N(4)-aminopropylspermidine. This Thermus thermophilus protein is N(4)-bis(aminopropyl)spermidine synthase.